A 262-amino-acid chain; its full sequence is Acyl-[acyl-carrier-protein]--UDP-N-acetylglucosamine O-acyltransferase (262 aa).

Belongs to the transferase hexapeptide repeat family. LpxA subfamily. In terms of assembly, homotrimer.

It is found in the cytoplasm. The enzyme catalyses a (3R)-hydroxyacyl-[ACP] + UDP-N-acetyl-alpha-D-glucosamine = a UDP-3-O-[(3R)-3-hydroxyacyl]-N-acetyl-alpha-D-glucosamine + holo-[ACP]. Its pathway is glycolipid biosynthesis; lipid IV(A) biosynthesis; lipid IV(A) from (3R)-3-hydroxytetradecanoyl-[acyl-carrier-protein] and UDP-N-acetyl-alpha-D-glucosamine: step 1/6. In terms of biological role, involved in the biosynthesis of lipid A, a phosphorylated glycolipid that anchors the lipopolysaccharide to the outer membrane of the cell. In Cronobacter sakazakii (strain ATCC BAA-894) (Enterobacter sakazakii), this protein is Acyl-[acyl-carrier-protein]--UDP-N-acetylglucosamine O-acyltransferase.